Reading from the N-terminus, the 63-residue chain is UPF0512 protein X (63 aa).

Belongs to the UPF0512 family.

This Dictyostelium discoideum (Social amoeba) protein is UPF0512 protein X.